The primary structure comprises 836 residues: DNA gyrase subunit A (836 aa).

Residues 34-500 enclose the Topo IIA-type catalytic domain; it reads LPDARDGLKP…AGDVRDIEDI (467 aa). Residue tyrosine 122 is the O-(5'-phospho-DNA)-tyrosine intermediate of the active site. The GyrA-box signature appears at 527–533; sequence QKRGGQG.

It belongs to the type II topoisomerase GyrA/ParC subunit family. Heterotetramer, composed of two GyrA and two GyrB chains. In the heterotetramer, GyrA contains the active site tyrosine that forms a transient covalent intermediate with DNA, while GyrB binds cofactors and catalyzes ATP hydrolysis.

It localises to the cytoplasm. The enzyme catalyses ATP-dependent breakage, passage and rejoining of double-stranded DNA.. Functionally, a type II topoisomerase that negatively supercoils closed circular double-stranded (ds) DNA in an ATP-dependent manner to modulate DNA topology and maintain chromosomes in an underwound state. Negative supercoiling favors strand separation, and DNA replication, transcription, recombination and repair, all of which involve strand separation. Also able to catalyze the interconversion of other topological isomers of dsDNA rings, including catenanes and knotted rings. Type II topoisomerases break and join 2 DNA strands simultaneously in an ATP-dependent manner. In Chlamydia trachomatis serovar D (strain ATCC VR-885 / DSM 19411 / UW-3/Cx), this protein is DNA gyrase subunit A.